A 355-amino-acid polypeptide reads, in one-letter code: Methylthioribose-1-phosphate isomerase (355 aa).

Substrate-binding positions include 47-49, arginine 91, and glutamine 199; that span reads RGA. Aspartate 240 (proton donor) is an active-site residue. 250 to 251 is a binding site for substrate; it reads NK.

Belongs to the eIF-2B alpha/beta/delta subunits family. MtnA subfamily.

It carries out the reaction 5-(methylsulfanyl)-alpha-D-ribose 1-phosphate = 5-(methylsulfanyl)-D-ribulose 1-phosphate. The protein operates within amino-acid biosynthesis; L-methionine biosynthesis via salvage pathway; L-methionine from S-methyl-5-thio-alpha-D-ribose 1-phosphate: step 1/6. Catalyzes the interconversion of methylthioribose-1-phosphate (MTR-1-P) into methylthioribulose-1-phosphate (MTRu-1-P). This chain is Methylthioribose-1-phosphate isomerase, found in Oleidesulfovibrio alaskensis (strain ATCC BAA-1058 / DSM 17464 / G20) (Desulfovibrio alaskensis).